The following is a 230-amino-acid chain: Ribonuclease 3 (230 aa).

Residues 6-135 (VSELRARYGI…FNGALFLDQG (130 aa)) enclose the RNase III domain. Glutamate 48 serves as a coordination point for Mg(2+). The active site involves aspartate 52. Aspartate 121 and glutamate 124 together coordinate Mg(2+). Glutamate 124 is a catalytic residue. A DRBM domain is found at 161 to 230 (DYKTNLQEFL…AKKALEQLKA (70 aa)).

The protein belongs to the ribonuclease III family. Homodimer. Requires Mg(2+) as cofactor.

It localises to the cytoplasm. The enzyme catalyses Endonucleolytic cleavage to 5'-phosphomonoester.. Its function is as follows. Digests double-stranded RNA. Involved in the processing of primary rRNA transcript to yield the immediate precursors to the large and small rRNAs (23S and 16S). Processes some mRNAs, and tRNAs when they are encoded in the rRNA operon. Processes pre-crRNA and tracrRNA of type II CRISPR loci if present in the organism. The protein is Ribonuclease 3 of Latilactobacillus sakei subsp. sakei (strain 23K) (Lactobacillus sakei subsp. sakei).